The following is a 217-amino-acid chain: MILILLGPPGIGKGTQAAVLSDLLKLQHVATGDIFRKNFQENTPLGKESKKFINKGLLVPDEITNQMIADYLSQIVPHSNFLLDGFPRNVFQAQFLETFFTKSNLHLNKVIYFNAFKQDLMKRIEGRRICSHCGKVYHLDNLPPKIEGICDKDQKKLIQREDDKPNTFLKRLKVFNQETLHLVEYYRSKKQLFEVDGMQNIQQVTQKILKVLETEQK.

10–15 (GIGKGT) is a binding site for ATP. An NMP region spans residues 30–59 (ATGDIFRKNFQENTPLGKESKKFINKGLLV). Residues Thr31, Arg36, 57-59 (LLV), 85-88 (GFPR), and Gln92 each bind AMP. An LID region spans residues 126-163 (GRRICSHCGKVYHLDNLPPKIEGICDKDQKKLIQREDD). Arg127 is a binding site for ATP. Residues Cys130 and Cys133 each contribute to the Zn(2+) site. 136–137 (VY) provides a ligand contact to ATP. Residues Cys150 and Asp153 each coordinate Zn(2+). Residues Arg160 and Arg171 each coordinate AMP. Gln199 serves as a coordination point for ATP.

Belongs to the adenylate kinase family. Monomer.

It localises to the cytoplasm. It carries out the reaction AMP + ATP = 2 ADP. It functions in the pathway purine metabolism; AMP biosynthesis via salvage pathway; AMP from ADP: step 1/1. Functionally, catalyzes the reversible transfer of the terminal phosphate group between ATP and AMP. Plays an important role in cellular energy homeostasis and in adenine nucleotide metabolism. The sequence is that of Adenylate kinase from Phytoplasma australiense.